The sequence spans 203 residues: Auxin-induced protein 22E (203 aa).

The short motif at 15 to 19 (LRLGL) is the EAR-like (transcriptional repression) element. The disordered stretch occupies residues 15–77 (LRLGLPGSDE…DHNEDSVQPA (63 aa)). The span at 43–52 (SSPELEESRC) shows a compositional bias: basic and acidic residues. A compositionally biased stretch (low complexity) spans 58 to 67 (SDSSDSTTTS). The region spanning 107-199 (GMYLKVSMAG…RIIKGSEAKG (93 aa)) is the PB1 domain.

This sequence belongs to the Aux/IAA family. Homodimers and heterodimers.

It localises to the nucleus. Aux/IAA proteins are short-lived transcriptional factors that function as repressors of early auxin response genes at low auxin concentrations. Repression is thought to result from the interaction with auxin response factors (ARFs), proteins that bind to the auxin-responsive promoter element (AuxRE). Formation of heterodimers with ARF proteins may alter their ability to modulate early auxin response genes expression. This chain is Auxin-induced protein 22E (AUX22E), found in Vigna radiata var. radiata (Mung bean).